Here is a 275-residue protein sequence, read N- to C-terminus: NH(3)-dependent NAD(+) synthetase (275 aa).

47 to 54 lines the ATP pocket; sequence GISGGQDS. Residue Asp-53 participates in Mg(2+) binding. Arg-141 contributes to the deamido-NAD(+) binding site. Residue Thr-161 participates in ATP binding. Mg(2+) is bound at residue Glu-166. Deamido-NAD(+) contacts are provided by Lys-174 and Asp-181. Lys-190 and Thr-212 together coordinate ATP. 261 to 262 contacts deamido-NAD(+); it reads HK.

The protein belongs to the NAD synthetase family. Homodimer.

The catalysed reaction is deamido-NAD(+) + NH4(+) + ATP = AMP + diphosphate + NAD(+) + H(+). It participates in cofactor biosynthesis; NAD(+) biosynthesis; NAD(+) from deamido-NAD(+) (ammonia route): step 1/1. Catalyzes the ATP-dependent amidation of deamido-NAD to form NAD. Uses ammonia as a nitrogen source. The polypeptide is NH(3)-dependent NAD(+) synthetase (Latilactobacillus sakei subsp. sakei (strain 23K) (Lactobacillus sakei subsp. sakei)).